Reading from the N-terminus, the 173-residue chain is Shikimate kinase 1 (173 aa).

14-19 (GAGKST) serves as a coordination point for ATP. Ser-18 contributes to the Mg(2+) binding site. Residues Asp-36, Arg-60, and Gly-82 each contribute to the substrate site. ATP is bound at residue Arg-120. Residue Arg-140 participates in substrate binding. Gln-157 is a binding site for ATP.

Belongs to the shikimate kinase family. In terms of assembly, monomer. It depends on Mg(2+) as a cofactor.

It localises to the cytoplasm. It catalyses the reaction shikimate + ATP = 3-phosphoshikimate + ADP + H(+). Its pathway is metabolic intermediate biosynthesis; chorismate biosynthesis; chorismate from D-erythrose 4-phosphate and phosphoenolpyruvate: step 5/7. Its function is as follows. Catalyzes the specific phosphorylation of the 3-hydroxyl group of shikimic acid using ATP as a cosubstrate. This Citrobacter koseri (strain ATCC BAA-895 / CDC 4225-83 / SGSC4696) protein is Shikimate kinase 1.